The sequence spans 435 residues: tRNA(Ile)-lysidine synthase (435 aa).

Position 25–30 (25–30) interacts with ATP; the sequence is SGGLDS.

This sequence belongs to the tRNA(Ile)-lysidine synthase family.

Its subcellular location is the cytoplasm. It catalyses the reaction cytidine(34) in tRNA(Ile2) + L-lysine + ATP = lysidine(34) in tRNA(Ile2) + AMP + diphosphate + H(+). In terms of biological role, ligates lysine onto the cytidine present at position 34 of the AUA codon-specific tRNA(Ile) that contains the anticodon CAU, in an ATP-dependent manner. Cytidine is converted to lysidine, thus changing the amino acid specificity of the tRNA from methionine to isoleucine. This Photobacterium profundum (strain SS9) protein is tRNA(Ile)-lysidine synthase.